Consider the following 644-residue polypeptide: ATP-dependent zinc metalloprotease FtsH (644 aa).

The Cytoplasmic segment spans residues 1–4 (MAKN). The helical transmembrane segment at 5-25 (LILWLVIAVVLMSVFQSFGPS) threads the bilayer. At 26–98 (ESNGRKVDYS…VGEPPEEPSL (73 aa)) the chain is on the periplasmic side. A helical transmembrane segment spans residues 99 to 119 (LASIFISWFPMLLLIGVWIFF). The Cytoplasmic portion of the chain corresponds to 120–644 (MRQMQGGGGK…NTMSEQLGDK (525 aa)). 192–199 (GPPGTGKT) contributes to the ATP binding site. Position 414 (histidine 414) interacts with Zn(2+). Glutamate 415 is an active-site residue. Residues histidine 418 and aspartate 492 each contribute to the Zn(2+) site. Residues 598-644 (VRPPAGWEEPGASNNAGDNGSPKAPRPVDEPRTPNPGNTMSEQLGDK) form a disordered region. The span at 632–644 (NPGNTMSEQLGDK) shows a compositional bias: polar residues.

In the central section; belongs to the AAA ATPase family. The protein in the C-terminal section; belongs to the peptidase M41 family. Homohexamer. Zn(2+) is required as a cofactor.

Its subcellular location is the cell inner membrane. Acts as a processive, ATP-dependent zinc metallopeptidase for both cytoplasmic and membrane proteins. Plays a role in the quality control of integral membrane proteins. This is ATP-dependent zinc metalloprotease FtsH from Escherichia coli O157:H7.